Here is a 337-residue protein sequence, read N- to C-terminus: Large ribosomal subunit protein uL3 (337 aa).

It belongs to the universal ribosomal protein uL3 family. As to quaternary structure, part of the 50S ribosomal subunit. Forms a cluster with proteins L14 and L24e.

Functionally, one of the primary rRNA binding proteins, it binds directly near the 3'-end of the 23S rRNA, where it nucleates assembly of the 50S subunit. The protein is Large ribosomal subunit protein uL3 of Methanospirillum hungatei JF-1 (strain ATCC 27890 / DSM 864 / NBRC 100397 / JF-1).